The following is a 167-amino-acid chain: Peptide deformylase (167 aa).

Fe cation is bound by residues C91 and H133. Residue E134 is part of the active site. H137 contacts Fe cation.

The protein belongs to the polypeptide deformylase family. Requires Fe(2+) as cofactor.

It carries out the reaction N-terminal N-formyl-L-methionyl-[peptide] + H2O = N-terminal L-methionyl-[peptide] + formate. Functionally, removes the formyl group from the N-terminal Met of newly synthesized proteins. Requires at least a dipeptide for an efficient rate of reaction. N-terminal L-methionine is a prerequisite for activity but the enzyme has broad specificity at other positions. The chain is Peptide deformylase from Chromobacterium violaceum (strain ATCC 12472 / DSM 30191 / JCM 1249 / CCUG 213 / NBRC 12614 / NCIMB 9131 / NCTC 9757 / MK).